We begin with the raw amino-acid sequence, 431 residues long: Adenylosuccinate synthetase (431 aa).

Residues 12–18 (GDEGKGK) and 40–42 (GHT) contribute to the GTP site. Catalysis depends on D13, which acts as the Proton acceptor. D13 and G40 together coordinate Mg(2+). Residues 13–16 (DEGK), 38–41 (NAGH), T130, R144, Q225, T240, and R304 contribute to the IMP site. The active-site Proton donor is H41. 300–306 (ATTGRPR) provides a ligand contact to substrate. GTP contacts are provided by residues R306, 332–334 (KLD), and 414–416 (SVG).

This sequence belongs to the adenylosuccinate synthetase family. As to quaternary structure, homodimer. Requires Mg(2+) as cofactor.

It is found in the cytoplasm. It catalyses the reaction IMP + L-aspartate + GTP = N(6)-(1,2-dicarboxyethyl)-AMP + GDP + phosphate + 2 H(+). Its pathway is purine metabolism; AMP biosynthesis via de novo pathway; AMP from IMP: step 1/2. Functionally, plays an important role in the de novo pathway of purine nucleotide biosynthesis. Catalyzes the first committed step in the biosynthesis of AMP from IMP. This is Adenylosuccinate synthetase from Anaeromyxobacter sp. (strain Fw109-5).